A 259-amino-acid chain; its full sequence is Hydroxyacylglutathione hydrolase (259 aa).

Zn(2+)-binding residues include H56, H58, D60, H61, H112, D133, and H171.

Belongs to the metallo-beta-lactamase superfamily. Glyoxalase II family. As to quaternary structure, monomer. Requires Zn(2+) as cofactor.

The enzyme catalyses an S-(2-hydroxyacyl)glutathione + H2O = a 2-hydroxy carboxylate + glutathione + H(+). Its pathway is secondary metabolite metabolism; methylglyoxal degradation; (R)-lactate from methylglyoxal: step 2/2. Thiolesterase that catalyzes the hydrolysis of S-D-lactoyl-glutathione to form glutathione and D-lactic acid. This is Hydroxyacylglutathione hydrolase from Pseudomonas putida (strain GB-1).